The following is a 639-amino-acid chain: Polyvinylalcohol dehydrogenase (639 aa).

A signal peptide spans 1–33 (MQQNIERNQVSMTTSRFVWGAVMALVALGSASA). Positions 36 to 152 (LNLPDGAALY…TPDQWNGWGA (117 aa)) constitute a Cytochrome c domain. Heme contacts are provided by Cys-49, Cys-52, and His-53.

It belongs to the bacterial PQQ dehydrogenase family. Monomer. Requires pyrroloquinoline quinone as cofactor.

It localises to the cytoplasm. It carries out the reaction a polyvinyl alcohol + 2n Fe(III)-[cytochrome c] = an oxidized polyvinyl alcohol + 2n Fe(II)-[cytochrome c] + 2n H(+). Its function is as follows. Catalyzes the oxidation of polyvinyl alcohol (PVA) in the polyvinyl alcohol degradation pathway. The sequence is that of Polyvinylalcohol dehydrogenase (pvaA) from Pseudomonas sp.